A 1003-amino-acid chain; its full sequence is UPF0182 protein Mkms_1433 (1003 aa).

A run of 7 helical transmembrane segments spans residues 18–38, 63–83, 114–134, 176–196, 211–231, 260–280, and 288–308; these read VLIG…RFID, VVVF…GLAL, LFGF…AQSY, FVAT…FGGI, IQLV…YWLD, KLIL…AIVL, and IGVV…PLVV. Over residues 902–937 the composition is skewed to low complexity; that stretch reads ATGPAPANLPDGQPAAQPPNGQQPAAQTPGNQAGRA. Residues 902 to 979 are disordered; it reads ATGPAPANLP…MSGLQDAQRS (78 aa).

The protein belongs to the UPF0182 family.

It is found in the cell membrane. The polypeptide is UPF0182 protein Mkms_1433 (Mycobacterium sp. (strain KMS)).